We begin with the raw amino-acid sequence, 175 residues long: Adenine phosphoribosyltransferase (175 aa).

The protein belongs to the purine/pyrimidine phosphoribosyltransferase family. In terms of assembly, homodimer.

Its subcellular location is the cytoplasm. It carries out the reaction AMP + diphosphate = 5-phospho-alpha-D-ribose 1-diphosphate + adenine. Its pathway is purine metabolism; AMP biosynthesis via salvage pathway; AMP from adenine: step 1/1. Functionally, catalyzes a salvage reaction resulting in the formation of AMP, that is energically less costly than de novo synthesis. This is Adenine phosphoribosyltransferase from Synechococcus sp. (strain CC9902).